We begin with the raw amino-acid sequence, 460 residues long: 4-O-methyl-glucuronoyl methylesterase (460 aa).

The N-terminal stretch at 1–17 (MASRFFALLLLAIPIQA) is a signal peptide. Glutamine 18 carries the pyrrolidone carboxylic acid modification. The CBM1 domain occupies 18-53 (QSPVWGQCGGIGWSGPTTCVGGATCVSYNPYYSQCI). Intrachain disulfides connect cysteine 96/cysteine 131, cysteine 277/cysteine 412, and cysteine 309/cysteine 384. The short motif at 276 to 281 (GCSRNG) is the GXSYXG catalytic site motif element. Serine 278 (nucleophile) is an active-site residue. Substrate is bound by residues lysine 282, glutamine 324, glutamate 332, and tryptophan 375. Residue histidine 411 is the Proton donor/acceptor of the active site. A glycan (N-linked (GlcNAc...) asparagine) is linked at asparagine 447.

This sequence belongs to the carbohydrate esterase 15 (CE15) family.

The protein localises to the secreted. It catalyses the reaction a 4-O-methyl-alpha-D-glucuronosyl ester derivative + H2O = 4-O-methyl-alpha-D-glucuronate derivative + an alcohol + H(+). Functionally, glucuronoyl esterase which may play a significant role in biomass degradation, as it is considered to disconnect hemicellulose from lignin through the hydrolysis of the ester bond between 4-O-methyl-D-glucuronic acid residues of glucuronoxylans and aromatic alcohols of lignin. Does not hydrolyze substrates of other carbohydrate esterases such as acetylxylan esterase, acetyl esterase and feruloyl esterase. In Hypocrea jecorina (strain QM6a) (Trichoderma reesei), this protein is 4-O-methyl-glucuronoyl methylesterase.